The primary structure comprises 335 residues: GTPase Obg (335 aa).

Residues 4-162 (GNFVDYTKIY…ADIVLELKVL (159 aa)) form the Obg domain. One can recognise an OBG-type G domain in the interval 163–332 (ADVGLVGFPN…LKDKLWAMLN (170 aa)). Residues 169 to 176 (GFPNAGKS), 194 to 198 (FTTLK), 216 to 219 (DIPG), 283 to 286 (SKCD), and 313 to 315 (SSI) contribute to the GTP site. 2 residues coordinate Mg(2+): S176 and T196.

It belongs to the TRAFAC class OBG-HflX-like GTPase superfamily. OBG GTPase family. Monomer. It depends on Mg(2+) as a cofactor.

Its subcellular location is the cytoplasm. An essential GTPase which binds GTP, GDP and possibly (p)ppGpp with moderate affinity, with high nucleotide exchange rates and a fairly low GTP hydrolysis rate. Plays a role in control of the cell cycle, stress response, ribosome biogenesis and in those bacteria that undergo differentiation, in morphogenesis control. The polypeptide is GTPase Obg (Flavobacterium psychrophilum (strain ATCC 49511 / DSM 21280 / CIP 103535 / JIP02/86)).